Here is a 209-residue protein sequence, read N- to C-terminus: Outer-membrane lipoprotein carrier protein (209 aa).

The signal sequence occupies residues 1 to 22 (MKKLLLTLAMVPAVLFSPTAWG).

It belongs to the LolA family. In terms of assembly, monomer.

It is found in the periplasm. Functionally, participates in the translocation of lipoproteins from the inner membrane to the outer membrane. Only forms a complex with a lipoprotein if the residue after the N-terminal Cys is not an aspartate (The Asp acts as a targeting signal to indicate that the lipoprotein should stay in the inner membrane). In Alcanivorax borkumensis (strain ATCC 700651 / DSM 11573 / NCIMB 13689 / SK2), this protein is Outer-membrane lipoprotein carrier protein.